The following is an 81-amino-acid chain: Cell division protein ZapB (81 aa).

Positions 5 to 81 (LEVFEKLEAK…QALLGRMEEV (77 aa)) form a coiled coil. Lys10 is subject to N6-acetyllysine. The tract at residues 36–67 (NNSLSQEVQNAQHQREELERENNHLKEQQNGW) is disordered. The segment covering 37–47 (NSLSQEVQNAQ) has biased composition (polar residues). Over residues 48–62 (HQREELERENNHLKE) the composition is skewed to basic and acidic residues.

It belongs to the ZapB family. Homodimer. The ends of the coiled-coil dimer bind to each other, forming polymers. Interacts with FtsZ.

Its subcellular location is the cytoplasm. Functionally, non-essential, abundant cell division factor that is required for proper Z-ring formation. It is recruited early to the divisome by direct interaction with FtsZ, stimulating Z-ring assembly and thereby promoting cell division earlier in the cell cycle. Its recruitment to the Z-ring requires functional FtsA or ZipA. The polypeptide is Cell division protein ZapB (Shigella boydii serotype 4 (strain Sb227)).